The sequence spans 437 residues: Aspartate aminotransferase, mitochondrial (437 aa).

Residues glycine 72, tryptophan 167, and asparagine 220 each coordinate L-aspartate. At lysine 284 the chain carries N6-(pyridoxal phosphate)lysine. Arginine 413 lines the L-aspartate pocket.

This sequence belongs to the class-I pyridoxal-phosphate-dependent aminotransferase family. Homodimer. Pyridoxal 5'-phosphate serves as cofactor.

It is found in the mitochondrion matrix. It carries out the reaction L-aspartate + 2-oxoglutarate = oxaloacetate + L-glutamate. Its function is as follows. Plays a key role in amino acid metabolism. Important for metabolite exchange between mitochondria and cytosol. The sequence is that of Aspartate aminotransferase, mitochondrial from Schizosaccharomyces pombe (strain 972 / ATCC 24843) (Fission yeast).